The following is a 494-amino-acid chain: Aspartyl/glutamyl-tRNA(Asn/Gln) amidotransferase subunit B (494 aa).

This sequence belongs to the GatB/GatE family. GatB subfamily. As to quaternary structure, heterotrimer of A, B and C subunits.

The enzyme catalyses L-glutamyl-tRNA(Gln) + L-glutamine + ATP + H2O = L-glutaminyl-tRNA(Gln) + L-glutamate + ADP + phosphate + H(+). It catalyses the reaction L-aspartyl-tRNA(Asn) + L-glutamine + ATP + H2O = L-asparaginyl-tRNA(Asn) + L-glutamate + ADP + phosphate + 2 H(+). Its function is as follows. Allows the formation of correctly charged Asn-tRNA(Asn) or Gln-tRNA(Gln) through the transamidation of misacylated Asp-tRNA(Asn) or Glu-tRNA(Gln) in organisms which lack either or both of asparaginyl-tRNA or glutaminyl-tRNA synthetases. The reaction takes place in the presence of glutamine and ATP through an activated phospho-Asp-tRNA(Asn) or phospho-Glu-tRNA(Gln). In Nitrobacter winogradskyi (strain ATCC 25391 / DSM 10237 / CIP 104748 / NCIMB 11846 / Nb-255), this protein is Aspartyl/glutamyl-tRNA(Asn/Gln) amidotransferase subunit B.